The sequence spans 487 residues: Bifunctional cytokinin biosynthesis protein (487 aa).

The tract at residues 1–266 is adenylate isopentenyltransferase; sequence MESTNRFMIG…RMASDFCYAS (266 aa). The cytokinin riboside 5'-monophosphate phosphoribohydrolase stretch occupies residues 267-487; the sequence is TSISFHPINE…FSRKGELEWV (221 aa). Substrate is bound by residues E352, 380–381, 403–409, and T415; these read RK and GYGTLEE.

In the N-terminal section; belongs to the IPP transferase family. This sequence in the C-terminal section; belongs to the LOG family.

It carries out the reaction dimethylallyl diphosphate + AMP = N(6)-(dimethylallyl)adenosine 5'-phosphate + diphosphate. The catalysed reaction is N(6)-(dimethylallyl)adenosine 5'-phosphate + H2O = N(6)-dimethylallyladenine + D-ribose 5-phosphate. The enzyme catalyses 9-ribosyl-trans-zeatin 5'-phosphate + H2O = trans-zeatin + D-ribose 5-phosphate. The protein operates within secondary metabolite biosynthesis. Bifunctional cytokinin synthesis protein; part of the gene cluster that mediates the biosynthesis of cytokinins such as fusatin, fusatinic acids or 8-oxofusatin, known for their growth promoting and anti-senescence activities toward host plants. FCK1 is a bifunctional enzyme that performs the first steps in the biosynthesis of Fusarium cytokinins. It first condenses adenosine monophosphate (AMP) with dimethylallyl diphosphate (DMAPP) to yield isoprenyl adenosine monophosphate. It then catalyzes the removal of the phosphoribose to produce isopentenylaldehyde. The cytochrome P450 monooxygenase then converts isopentenylaldehyde to trans-zeatin. A condensation step converts trans-zeatin to fusatin which is further modified to produce fusatinic acid. The mechanism for oxidation of fusatin to fusatinic acid remains unknown. 8-oxofusatin could be produced through several pathways, via direct oxygenation of fusatin, or via the 8-oxo-pentenyladenine intermediate which itself must arise from either the prenylation of 8-oxo-AMP by FCK1 and/or oxygenation of isopentenylaldehyde. Both the FCK3 and FCK4 enzymes act downstream of the identified cytokinins to produce yet unidentified compounds. This chain is Bifunctional cytokinin biosynthesis protein, found in Fusarium pseudograminearum (strain CS3096) (Wheat and barley crown-rot fungus).